The primary structure comprises 382 residues: Galactokinase (382 aa).

Position 34-37 (34-37) interacts with substrate; that stretch reads EHTD. 124–130 contributes to the ATP binding site; that stretch reads GAGLSSS. Serine 130 and glutamate 162 together coordinate Mg(2+). The active-site Proton acceptor is the aspartate 174. Substrate is bound at residue tyrosine 223.

The protein belongs to the GHMP kinase family. GalK subfamily.

The protein localises to the cytoplasm. It carries out the reaction alpha-D-galactose + ATP = alpha-D-galactose 1-phosphate + ADP + H(+). It participates in carbohydrate metabolism; galactose metabolism. In terms of biological role, catalyzes the transfer of the gamma-phosphate of ATP to D-galactose to form alpha-D-galactose-1-phosphate (Gal-1-P). In Salmonella paratyphi B (strain ATCC BAA-1250 / SPB7), this protein is Galactokinase.